A 207-amino-acid chain; its full sequence is Na(+)-translocating NADH-quinone reductase subunit D (207 aa).

6 consecutive transmembrane segments (helical) span residues 20–40, 41–61, 69–89, 102–122, 130–150, and 177–197; these read IALQILGICSALAVTTQLQTA, FVMAIAVSLVTAFSSMFISMI, IRIIVQMAIIASLVILVDQIL, VFVGLIITNCIVMGRAEAFAM, FVDGIGNGLGYGAMLVIVAFL, and NGLFLLAPSAFFIIGFVIWAI.

It belongs to the NqrDE/RnfAE family. In terms of assembly, composed of six subunits; NqrA, NqrB, NqrC, NqrD, NqrE and NqrF.

Its subcellular location is the cell inner membrane. The catalysed reaction is a ubiquinone + n Na(+)(in) + NADH + H(+) = a ubiquinol + n Na(+)(out) + NAD(+). Functionally, NQR complex catalyzes the reduction of ubiquinone-1 to ubiquinol by two successive reactions, coupled with the transport of Na(+) ions from the cytoplasm to the periplasm. NqrA to NqrE are probably involved in the second step, the conversion of ubisemiquinone to ubiquinol. This Haemophilus ducreyi (strain 35000HP / ATCC 700724) protein is Na(+)-translocating NADH-quinone reductase subunit D.